A 323-amino-acid polypeptide reads, in one-letter code: Phospho-N-acetylmuramoyl-pentapeptide-transferase (323 aa).

The next 9 helical transmembrane spans lie at 12 to 32 (IVMAIVISFIVASILGPIIIP), 58 to 78 (PTIGGLIFIFATIITMFIMVG), 84 to 104 (AMIALYSFVGFGFVGFLDDLL), 120 to 140 (MILLLIVSGFLTWYAYKYIGT), 151 to 171 (INFGLFYIPFVMFYFAGVTNA), 177 to 197 (GLDGLATSVTVLVTTFLGIIS), 200 to 220 (LGHISLAIFCVALAGALLAFL), 229 to 250 (VFMGDTGSLALGGAVAMVALIL), and 303 to 323 (KIVSVFSIITVVFCFIAFASL).

The protein belongs to the glycosyltransferase 4 family. MraY subfamily. Mg(2+) is required as a cofactor.

The protein localises to the cell membrane. The catalysed reaction is UDP-N-acetyl-alpha-D-muramoyl-L-alanyl-gamma-D-glutamyl-meso-2,6-diaminopimeloyl-D-alanyl-D-alanine + di-trans,octa-cis-undecaprenyl phosphate = di-trans,octa-cis-undecaprenyl diphospho-N-acetyl-alpha-D-muramoyl-L-alanyl-D-glutamyl-meso-2,6-diaminopimeloyl-D-alanyl-D-alanine + UMP. It participates in cell wall biogenesis; peptidoglycan biosynthesis. In terms of biological role, catalyzes the initial step of the lipid cycle reactions in the biosynthesis of the cell wall peptidoglycan: transfers peptidoglycan precursor phospho-MurNAc-pentapeptide from UDP-MurNAc-pentapeptide onto the lipid carrier undecaprenyl phosphate, yielding undecaprenyl-pyrophosphoryl-MurNAc-pentapeptide, known as lipid I. The protein is Phospho-N-acetylmuramoyl-pentapeptide-transferase of Clostridium perfringens (strain ATCC 13124 / DSM 756 / JCM 1290 / NCIMB 6125 / NCTC 8237 / Type A).